The chain runs to 271 residues: Phosphatidylinositol transfer protein beta isoform (271 aa).

Lys215 carries the post-translational modification N6-acetyllysine. Position 262 is a phosphoserine (Ser262).

Belongs to the PtdIns transfer protein family. PI transfer class I subfamily. Post-translationally, constitutive phosphorylation of Ser-262 has no effect on phospholipid transfer activity but is required for Golgi targeting. In terms of tissue distribution, expressed abundantly in brain, kidney, liver, and lung, but in a lesser amount in testis.

The protein resides in the golgi apparatus. It is found in the golgi apparatus membrane. It localises to the endoplasmic reticulum membrane. It carries out the reaction a 1,2-diacyl-sn-glycero-3-phosphocholine(in) = a 1,2-diacyl-sn-glycero-3-phosphocholine(out). The catalysed reaction is a 1,2-diacyl-sn-glycero-3-phospho-(1D-myo-inositol)(in) = a 1,2-diacyl-sn-glycero-3-phospho-(1D-myo-inositol)(out). It catalyses the reaction an N-(acyl)-sphingosylphosphocholine(in) = an N-(acyl)-sphingosylphosphocholine(out). With respect to regulation, phosphatidylinositol transfer activity is inhibited by N-ethylmaleimide. Functionally, catalyzes the transfer of phosphatidylinositol between membranes. Also catalyzes the transfer of phosphatidylcholine and sphingomyelin between membranes. Required for COPI-mediated retrograde transport from the Golgi to the endoplasmic reticulum; phosphatidylinositol and phosphatidylcholine transfer activity is essential for this function. The protein is Phosphatidylinositol transfer protein beta isoform (Pitpnb) of Rattus norvegicus (Rat).